Here is a 114-residue protein sequence, read N- to C-terminus: Nucleoid-associated protein MAB_0319 (114 aa).

The protein belongs to the YbaB/EbfC family. Homodimer.

It is found in the cytoplasm. It localises to the nucleoid. Binds to DNA and alters its conformation. May be involved in regulation of gene expression, nucleoid organization and DNA protection. The sequence is that of Nucleoid-associated protein MAB_0319 from Mycobacteroides abscessus (strain ATCC 19977 / DSM 44196 / CCUG 20993 / CIP 104536 / JCM 13569 / NCTC 13031 / TMC 1543 / L948) (Mycobacterium abscessus).